We begin with the raw amino-acid sequence, 170 residues long: Adenine phosphoribosyltransferase (170 aa).

It belongs to the purine/pyrimidine phosphoribosyltransferase family. As to quaternary structure, homodimer.

The protein resides in the cytoplasm. It carries out the reaction AMP + diphosphate = 5-phospho-alpha-D-ribose 1-diphosphate + adenine. Its pathway is purine metabolism; AMP biosynthesis via salvage pathway; AMP from adenine: step 1/1. In terms of biological role, catalyzes a salvage reaction resulting in the formation of AMP, that is energically less costly than de novo synthesis. The sequence is that of Adenine phosphoribosyltransferase from Brevibacillus brevis (strain 47 / JCM 6285 / NBRC 100599).